The chain runs to 492 residues: Fascin-2 (492 aa).

This sequence belongs to the fascin family. As to expression, localized specifically in the outer and inner segments of the photoreceptor cells in the retina.

Its subcellular location is the cytoplasm. It is found in the cytoskeleton. The protein localises to the cell projection. It localises to the stereocilium. Its function is as follows. Acts as an actin bundling protein. May play a pivotal role in photoreceptor cell-specific events, such as disk morphogenesis. This chain is Fascin-2 (FSCN2), found in Homo sapiens (Human).